Here is a 202-residue protein sequence, read N- to C-terminus: uncharacterized protein (202 aa).

K136 participates in a covalent cross-link: Isoglutamyl lysine isopeptide (Lys-Gln) (interchain with Q-Cter in protein Pup).

This is an uncharacterized protein from Mycobacterium tuberculosis (strain ATCC 25618 / H37Rv).